A 24-amino-acid polypeptide reads, in one-letter code: uncharacterized protein (24 aa).

This is an uncharacterized protein from Schizosaccharomyces pombe (strain 972 / ATCC 24843) (Fission yeast).